The following is a 276-amino-acid chain: Outer plastidial membrane protein porin (276 aa).

It belongs to the eukaryotic mitochondrial porin (TC 1.B.8.1) family.

It is found in the plastid outer membrane. Its function is as follows. Forms a channel through the cell membrane that allows diffusion of small hydrophilic molecules. The channel adopts an open conformation at low or zero membrane potential and a closed conformation at potentials above 30-40 mV. The open state has a weak anion selectivity whereas the closed state is cation-selective. In Pisum sativum (Garden pea), this protein is Outer plastidial membrane protein porin (POR1).